The primary structure comprises 119 residues: Ribonuclease P protein component (119 aa).

This sequence belongs to the RnpA family. As to quaternary structure, consists of a catalytic RNA component (M1 or rnpB) and a protein subunit.

It carries out the reaction Endonucleolytic cleavage of RNA, removing 5'-extranucleotides from tRNA precursor.. Its function is as follows. RNaseP catalyzes the removal of the 5'-leader sequence from pre-tRNA to produce the mature 5'-terminus. It can also cleave other RNA substrates such as 4.5S RNA. The protein component plays an auxiliary but essential role in vivo by binding to the 5'-leader sequence and broadening the substrate specificity of the ribozyme. This is Ribonuclease P protein component from Nitrosomonas europaea (strain ATCC 19718 / CIP 103999 / KCTC 2705 / NBRC 14298).